The primary structure comprises 237 residues: Sugar fermentation stimulation protein homolog (237 aa).

It belongs to the SfsA family.

This is Sugar fermentation stimulation protein homolog from Synechocystis sp. (strain ATCC 27184 / PCC 6803 / Kazusa).